Reading from the N-terminus, the 349-residue chain is RING-H2 finger protein ATL48 (349 aa).

An HIG1 domain is found at 1 to 85 (MSSVEPDMED…DNPWKKLLLS (85 aa)). Position 2 is an N-acetylserine (serine 2). A run of 3 helical transmembrane segments spans residues 21–41 (PLVPLGALMTAGVLTAGLISF), 55–75 (ARVVVQGATVALMVGTGYYYG), and 121–141 (CLVISGLALIIVFLGVLYLIF). The RING-type; atypical zinc finger occupies 207–249 (CAVCLNEFSDTDKLRLLPVCSHAFHLHCIDTWLLSNSTCPLCR).

Belongs to the RING-type zinc finger family. ATL subfamily.

It is found in the membrane. The enzyme catalyses S-ubiquitinyl-[E2 ubiquitin-conjugating enzyme]-L-cysteine + [acceptor protein]-L-lysine = [E2 ubiquitin-conjugating enzyme]-L-cysteine + N(6)-ubiquitinyl-[acceptor protein]-L-lysine.. Its pathway is protein modification; protein ubiquitination. The chain is RING-H2 finger protein ATL48 (ATL48) from Arabidopsis thaliana (Mouse-ear cress).